The primary structure comprises 226 residues: UPF0173 metal-dependent hydrolase CTN_1413 (226 aa).

Belongs to the UPF0173 family.

This is UPF0173 metal-dependent hydrolase CTN_1413 from Thermotoga neapolitana (strain ATCC 49049 / DSM 4359 / NBRC 107923 / NS-E).